A 232-amino-acid polypeptide reads, in one-letter code: Zinc finger protein RTS2 (232 aa).

A C2H2-type zinc finger spans residues 24-48 (YYCQICQRQCKDANGFQSHNKSPSH). Disordered regions lie at residues 180 to 199 (AKRQ…ISGD) and 211 to 232 (GNGR…IKFR).

The protein resides in the nucleus. The polypeptide is Zinc finger protein RTS2 (RTS2) (Saccharomyces cerevisiae (strain ATCC 204508 / S288c) (Baker's yeast)).